Here is a 122-residue protein sequence, read N- to C-terminus: Hydrogenase maturation factor HypA (122 aa).

His2 contacts Ni(2+). 4 residues coordinate Zn(2+): Cys73, Cys75, Cys95, and Cys98.

It belongs to the HypA/HybF family.

In terms of biological role, involved in the maturation of [NiFe] hydrogenases. Required for nickel insertion into the metal center of the hydrogenase. The sequence is that of Hydrogenase maturation factor HypA from Methanothermobacter thermautotrophicus (strain ATCC 29096 / DSM 1053 / JCM 10044 / NBRC 100330 / Delta H) (Methanobacterium thermoautotrophicum).